Consider the following 308-residue polypeptide: ADP-L-glycero-D-manno-heptose-6-epimerase (308 aa).

NADP(+)-binding positions include 10 to 11 (FI), 31 to 32 (DN), K38, K53, 75 to 79 (EGACS), and N92. Y139 (proton acceptor) is an active-site residue. Residue K143 participates in NADP(+) binding. Substrate is bound at residue N168. V169 and K177 together coordinate NADP(+). The Proton acceptor role is filled by K177. Substrate is bound by residues S179, H186, 200 to 203 (FAGS), R208, and Y271.

It belongs to the NAD(P)-dependent epimerase/dehydratase family. HldD subfamily. In terms of assembly, homopentamer. The cofactor is NADP(+).

It catalyses the reaction ADP-D-glycero-beta-D-manno-heptose = ADP-L-glycero-beta-D-manno-heptose. The protein operates within nucleotide-sugar biosynthesis; ADP-L-glycero-beta-D-manno-heptose biosynthesis; ADP-L-glycero-beta-D-manno-heptose from D-glycero-beta-D-manno-heptose 7-phosphate: step 4/4. Functionally, catalyzes the interconversion between ADP-D-glycero-beta-D-manno-heptose and ADP-L-glycero-beta-D-manno-heptose via an epimerization at carbon 6 of the heptose. The polypeptide is ADP-L-glycero-D-manno-heptose-6-epimerase (Haemophilus influenzae (strain 86-028NP)).